Consider the following 450-residue polypeptide: Phosphoglucosamine mutase (450 aa).

Catalysis depends on Ser101, which acts as the Phosphoserine intermediate. Residues Ser101, Asp242, Asp244, and Asp246 each coordinate Mg(2+). Ser101 carries the phosphoserine modification.

Belongs to the phosphohexose mutase family. Mg(2+) serves as cofactor. Activated by phosphorylation.

The catalysed reaction is alpha-D-glucosamine 1-phosphate = D-glucosamine 6-phosphate. Functionally, catalyzes the conversion of glucosamine-6-phosphate to glucosamine-1-phosphate. The protein is Phosphoglucosamine mutase of Rhodopseudomonas palustris (strain BisA53).